We begin with the raw amino-acid sequence, 665 residues long: SH3 domain-containing kinase-binding protein 1 (665 aa).

SH3 domains lie at 1–58 (MVEA…EIKK) and 98–157 (RRRR…ELSG). Residues S156, S159, S183, and S230 each carry the phosphoserine modification. A disordered region spans residues 159 to 200 (SDELGISQDEQLSKSSLRETTGSESDGGDSSSTKSEGANGTV). The segment covering 177 to 195 (ETTGSESDGGDSSSTKSEG) has biased composition (low complexity). T254 carries the post-translational modification Phosphothreonine. Positions 267-328 (KSKDYCKVIF…PDNFVKLLPP (62 aa)) constitute an SH3 3 domain. 2 disordered regions span residues 328-444 (PDFE…LAGS) and 467-610 (DSVV…AAVE). Over residues 355–390 (TERKHEIKKIPPERPEMLPNRTEEKERPEREPKLDL) the composition is skewed to basic and acidic residues. At S436 the chain carries Phosphoserine. The segment covering 469 to 484 (VVSSTEKLSHPTTSRP) has biased composition (polar residues). Residues 491–510 (PPSQSLTSSSLSSPDIFDSP) are compositionally biased toward low complexity. Phosphoserine occurs at positions 509, 511, and 521. A compositionally biased stretch (basic and acidic residues) spans 517 to 531 (EEHISLAHRGVDASK). Polar residues predominate over residues 535-546 (KTVTISQVSDNK). Over residues 564-582 (APLSSAAPSPLSSSLGTAG) the composition is skewed to low complexity. Position 587 is a phosphoserine (S587). Residues 602–664 (AASSQAAVEE…VNDIKKALQS (63 aa)) are a coiled coil.

As to quaternary structure, can self-associate and form homotetramers. Interacts with CD2, F-actin capping protein, PIK3R3, GRB2, EGFR, MET, BLNK, MAP3K4, PDCD6IP, SPRY2, ARHGAP17, ARHGAP27, MAGI2, CRK, BCAR1, SOS1, ASAP1, ARAP3, HIP1R, SYNJ2, INPP5D and STAP1. Interacts with E3 ubiquitin-protein ligases CBL and CBLB, but does not interact with CBLC. Two molecules of SH3KBP1 seem to bind through their respective SH3 1 domain to one molecule of CBLB. The interaction with CBL or CBLB and EGFR is increased upon EGF stimulation. The interaction with CBL is attenuated by PDCD6IP. Interacts (via SH3 domains) with ARAP1. The interaction is independent of EGF and does not affect ARAP1 GTPase-activating activity but is involved in regulating ubiquitination and endocytic trafficking of EGFR. ARAP1 competes with CBL for binding to SH3KBP1 and prevents interaction of CBL with SH3KBP1; this is likely to regulate SH3KBP1-mediated internalization of EGFR. Interacts through its proline-rich region with the SH3 domain of endophilins SH3GL1, SH3GL2 and SH3GL3. The SH3KBP1-endophilin complex seems to associate with a complex containing the phosphorylated receptor (EGFR or MET) and phosphorylated CBL. Probably associates with ASAP1 and phosphorylated EGFR. Probably part of a complex consisting of at least SH3KBP1, ASAP1 and ARAP3. Interacts with focal adhesion kinases PTK2/FAK1 and PTK2B/PYK2, probably as a dimer. Interacts with DAB2 and probably associates with chathrin through its interaction with DAB2. Part of a complex consisting of SH3KBP1, DAB2, and clathrin heavy chain. DAB2 and clathrin dissociate from SH3KBP1 following growth factor treatment, enabling interaction with CBL. Interacts with DDN and probably associates with MAGI2 through its interaction with DDN. Interacts with the SH3 domains of SRC tyrosine-protein kinases SRC, LCK, LYN, FGR, FYN and HCK. Interacts with TRADD, BIRC2, TRAF1, TRAF2 and TNFR1, and the association with a TNFR1-associated complex upon stimulation with TNF-alpha seems to be mediated by SRC. Interacts (via SH3 domains) with SHKBP1 (via PXXXPR motifs). Interaction with CBL is abolished in the presence of SHKBP1. Interacts (via SH3 domains) with ZFP36 (via extreme C-terminal region). Interacts with MAP3K4; this interaction enhances the association with ZFP36. (Microbial infection) Interacts (via SH3 domains) with Chikungunya virus non-structural protein 3 (via C-terminus); this interaction plays a role in initiation of viral replication. Monoubiquitinated by CBL and CBLB after EGF stimulation; probably on its C-terminus. In terms of tissue distribution, ubiquitously expressed. Also expressed in some cancer cell lines.

Its subcellular location is the cytoplasm. The protein resides in the cytoskeleton. It localises to the cytoplasmic vesicle membrane. The protein localises to the synapse. It is found in the synaptosome. Its subcellular location is the cell junction. The protein resides in the focal adhesion. In terms of biological role, adapter protein involved in regulating diverse signal transduction pathways. Involved in the regulation of endocytosis and lysosomal degradation of ligand-induced receptor tyrosine kinases, including EGFR and MET/hepatocyte growth factor receptor, through an association with CBL and endophilins. The association with CBL, and thus the receptor internalization, may be inhibited by an interaction with PDCD6IP and/or SPRY2. Involved in regulation of ligand-dependent endocytosis of the IgE receptor. Attenuates phosphatidylinositol 3-kinase activity by interaction with its regulatory subunit. May be involved in regulation of cell adhesion; promotes the interaction between TTK2B and PDCD6IP. May be involved in the regulation of cellular stress response via the MAPK pathways through its interaction with MAP3K4. Is involved in modulation of tumor necrosis factor mediated apoptosis. Plays a role in the regulation of cell morphology and cytoskeletal organization. Required in the control of cell shape and migration. Has an essential role in the stimulation of B cell activation. The protein is SH3 domain-containing kinase-binding protein 1 (SH3KBP1) of Homo sapiens (Human).